The primary structure comprises 113 residues: Non-specific lipid-transfer protein 6 (113 aa).

A signal peptide spans 1 to 19 (MRSLLLAVCLVLALHCGEA). Disulfide bonds link C23–C70, C33–C47, C48–C95, and C68–C109.

Belongs to the plant LTP family.

Functionally, plant non-specific lipid-transfer proteins transfer phospholipids as well as galactolipids across membranes. May play a role in wax or cutin deposition in the cell walls of expanding epidermal cells and certain secretory tissues. This Arabidopsis thaliana (Mouse-ear cress) protein is Non-specific lipid-transfer protein 6 (LTP6).